A 295-amino-acid chain; its full sequence is UDP-N-acetylenolpyruvoylglucosamine reductase (295 aa).

An FAD-binding PCMH-type domain is found at 24-188 (KVGGNAEIFF…LKVIFKINKG (165 aa)). The active site involves Arg168. Ser217 serves as the catalytic Proton donor. Glu287 is an active-site residue.

This sequence belongs to the MurB family. FAD is required as a cofactor.

The protein localises to the cytoplasm. It carries out the reaction UDP-N-acetyl-alpha-D-muramate + NADP(+) = UDP-N-acetyl-3-O-(1-carboxyvinyl)-alpha-D-glucosamine + NADPH + H(+). Its pathway is cell wall biogenesis; peptidoglycan biosynthesis. Cell wall formation. This Rickettsia rickettsii (strain Iowa) protein is UDP-N-acetylenolpyruvoylglucosamine reductase.